We begin with the raw amino-acid sequence, 561 residues long: Trehalose-6-phosphate hydrolase (561 aa).

Asp-203 functions as the Nucleophile in the catalytic mechanism. The active-site Proton donor is Glu-254.

It belongs to the glycosyl hydrolase 13 family.

It is found in the cytoplasm. The enzyme catalyses alpha,alpha-trehalose 6-phosphate + H2O = D-glucose 6-phosphate + D-glucose. Activity is stimulated by high salt concentrations with different efficiencies depending on the kind of salt. In vitro, inhibited by glucose. Functionally, hydrolyzes trehalose-6-phosphate to glucose and glucose 6-phosphate. Can also very effectively hydrolyze p-nitrophenyl-alpha-D-glucopyranoside, but not lactose, maltose, sucrose or sucrose-6-phosphate. Trehalose is also hydrolyzed, but to a much smaller extent than trehalose-6-phosphate. The sequence is that of Trehalose-6-phosphate hydrolase from Bacillus subtilis (strain 168).